Consider the following 432-residue polypeptide: Adenylosuccinate synthetase (432 aa).

GTP-binding positions include 13–19 (GDEGKGK) and 41–43 (GHT). Residue Asp14 is the Proton acceptor of the active site. Asp14 and Gly41 together coordinate Mg(2+). Residues 14-17 (DEGK), 39-42 (NAGH), Thr130, Arg144, Gln225, Thr240, and Arg304 each bind IMP. The active-site Proton donor is His42. 300 to 306 (ATTGRKR) is a binding site for substrate. GTP is bound by residues Arg306, 332–334 (KLD), and 415–417 (STG).

Belongs to the adenylosuccinate synthetase family. Homodimer. Requires Mg(2+) as cofactor.

It localises to the cytoplasm. It carries out the reaction IMP + L-aspartate + GTP = N(6)-(1,2-dicarboxyethyl)-AMP + GDP + phosphate + 2 H(+). Its pathway is purine metabolism; AMP biosynthesis via de novo pathway; AMP from IMP: step 1/2. Plays an important role in the de novo pathway of purine nucleotide biosynthesis. Catalyzes the first committed step in the biosynthesis of AMP from IMP. This Tolumonas auensis (strain DSM 9187 / NBRC 110442 / TA 4) protein is Adenylosuccinate synthetase.